We begin with the raw amino-acid sequence, 469 residues long: Glutamate--tRNA ligase (469 aa).

Positions 11–21 (PSPTGFIHLGN) match the 'HIGH' region motif. Residues 118–131 (GEKPRYDGTWRPEP) are compositionally biased toward basic and acidic residues. Residues 118–138 (GEKPRYDGTWRPEPGKVLPEP) form a disordered region. The 'KMSKS' region motif lies at 243 to 247 (KMSKR). Lys-246 contributes to the ATP binding site.

Belongs to the class-I aminoacyl-tRNA synthetase family. Glutamate--tRNA ligase type 1 subfamily. Monomer.

Its subcellular location is the cytoplasm. It catalyses the reaction tRNA(Glu) + L-glutamate + ATP = L-glutamyl-tRNA(Glu) + AMP + diphosphate. Its function is as follows. Catalyzes the attachment of glutamate to tRNA(Glu) in a two-step reaction: glutamate is first activated by ATP to form Glu-AMP and then transferred to the acceptor end of tRNA(Glu). The protein is Glutamate--tRNA ligase of Burkholderia vietnamiensis (strain G4 / LMG 22486) (Burkholderia cepacia (strain R1808)).